The following is a 635-amino-acid chain: Extracellular metalloproteinase 1 (635 aa).

An N-terminal signal peptide occupies residues 1-19 (MHGLLLAAGLLSLPLHVLA). Residues 20–246 (HPQPSTSTSL…VHNVVDYVAH (227 aa)) constitute a propeptide that is removed on maturation. A glycan (N-linked (GlcNAc...) asparagine) is linked at N287. H430 contributes to the Zn(2+) binding site. The active site involves E431. H434 is a Zn(2+) binding site. N-linked (GlcNAc...) asparagine glycans are attached at residues N475, N594, and N623.

The protein belongs to the peptidase M36 family. Zn(2+) is required as a cofactor.

Its subcellular location is the secreted. Its function is as follows. Secreted metalloproteinase probably acting as a virulence factor. The sequence is that of Extracellular metalloproteinase 1 (MEP1) from Arthroderma benhamiae (Trichophyton mentagrophytes).